A 68-amino-acid polypeptide reads, in one-letter code: UPF0435 protein Sca_1453 (68 aa).

This sequence belongs to the UPF0435 family.

This Staphylococcus carnosus (strain TM300) protein is UPF0435 protein Sca_1453.